Reading from the N-terminus, the 433-residue chain is Trigger factor (433 aa).

Positions 163 to 248 constitute a PPIase FKBP-type domain; it reads GDTVNIDFSG…VNEIKFKEVP (86 aa).

It belongs to the FKBP-type PPIase family. Tig subfamily.

The protein resides in the cytoplasm. It carries out the reaction [protein]-peptidylproline (omega=180) = [protein]-peptidylproline (omega=0). Involved in protein export. Acts as a chaperone by maintaining the newly synthesized protein in an open conformation. Functions as a peptidyl-prolyl cis-trans isomerase. This chain is Trigger factor, found in Staphylococcus aureus (strain COL).